Consider the following 429-residue polypeptide: MDRIKIIGGNELRGTIPISGAKNAALPLMIAALLTDETLILDNVPRLADVALLQRILGNHGVDIMAAGKRPGDHEYQGQTLHISAKTIVDTTAPYDLVSKMRASFWVIAPLVARMHEAKVSLPGGCAIGTRPVDLLIMALEKLGAEITIDGGYVIAKAPGGLKGATIAFPKVTVSGTHVAVMAAALAKGTTIIDNAACEPEIVDVADCLNKMGAKITGAGTPRITIEGVAKLHGARHTVLPDRIETGTYAMAVAMAGGEVQLSGARPELLQAALDVLTQAGATITVNNDGIKVARNGAGISPVTVTTAPFPGFPTDLQAQLMALMTRAKGASHITETIFENRFMHVQELARFGAKISLDGETATIDGVERLRGAPVMATDLRASVSLVIAALAAEGETMVNRIYHLDRGFERLEEKLSACGANIERISG.

22 to 23 (KN) lines the phosphoenolpyruvate pocket. Arginine 102 is a UDP-N-acetyl-alpha-D-glucosamine binding site. Cysteine 126 functions as the Proton donor in the catalytic mechanism. Cysteine 126 bears the 2-(S-cysteinyl)pyruvic acid O-phosphothioketal mark. UDP-N-acetyl-alpha-D-glucosamine contacts are provided by residues 131–135 (RPVDL), aspartate 316, and isoleucine 338.

Belongs to the EPSP synthase family. MurA subfamily.

The protein resides in the cytoplasm. It catalyses the reaction phosphoenolpyruvate + UDP-N-acetyl-alpha-D-glucosamine = UDP-N-acetyl-3-O-(1-carboxyvinyl)-alpha-D-glucosamine + phosphate. Its pathway is cell wall biogenesis; peptidoglycan biosynthesis. Its function is as follows. Cell wall formation. Adds enolpyruvyl to UDP-N-acetylglucosamine. This is UDP-N-acetylglucosamine 1-carboxyvinyltransferase from Rhodopseudomonas palustris (strain TIE-1).